A 71-amino-acid chain; its full sequence is Beta-defensin 10 (71 aa).

The signal sequence occupies residues 1-23 (MKTLCSLLLIGCLLFSYDTPVVG). 3 disulfide bridges follow: C37–C66, C44–C59, and C49–C67.

It belongs to the beta-defensin family.

The protein resides in the secreted. Functionally, has antibacterial activity. The protein is Beta-defensin 10 (Defb10) of Rattus norvegicus (Rat).